Reading from the N-terminus, the 159-residue chain is Olfactory receptor-like protein COR8 (159 aa).

The Cytoplasmic segment spans residues valine 1 to serine 16. The helical transmembrane segment at leucine 17–leucine 41 threads the bilayer. Over proline 42–threonine 82 the chain is Extracellular. Asparagine 80 carries N-linked (GlcNAc...) asparagine glycosylation. A helical membrane pass occupies residues isoleucine 83–leucine 103. The Cytoplasmic segment spans residues serine 104–serine 116. A helical membrane pass occupies residues threonine 117–methionine 137. Residues glutamine 138 to glutamate 148 are Extracellular-facing. Residues lysine 149–valine 159 form a helical membrane-spanning segment.

This sequence belongs to the G-protein coupled receptor 1 family.

It localises to the cell membrane. In terms of biological role, odorant receptor. The sequence is that of Olfactory receptor-like protein COR8 (COR8) from Gallus gallus (Chicken).